Reading from the N-terminus, the 312-residue chain is Olfactory receptor 14C36 (312 aa).

The Extracellular segment spans residues 1–23; sequence MPNSTTVMEFLLMRFSDVWTLQI. N-linked (GlcNAc...) asparagine glycosylation is present at asparagine 3. Residues 24-44 traverse the membrane as a helical segment; that stretch reads LHSASFFMLYLVTLMGNILIV. The Cytoplasmic portion of the chain corresponds to 45–52; sequence TVTTCDSS. The chain crosses the membrane as a helical span at residues 53–73; sequence LHMPMYFFLRNLSILDACYIS. Residues 74–97 are Extracellular-facing; the sequence is VTVPTSCVNSLLDSTTISKAGCVA. Cysteine 95 and cysteine 187 are disulfide-bonded. A helical transmembrane segment spans residues 98 to 118; that stretch reads QVFLVVFFVYVELLFLTIMAH. The Cytoplasmic segment spans residues 119–137; that stretch reads DRYVAVCQPLHYPVIVNSR. A helical membrane pass occupies residues 138-158; the sequence is ICIQMTLASLLSGLVYAGMHT. Residues 159–194 lie on the Extracellular side of the membrane; that stretch reads GSTFQLPFCRSNVIHQFFCDIPSLLKLSCSDTFSNE. Residues 195-215 traverse the membrane as a helical segment; sequence VMIVVSALGVGGGCFIFIIRS. Over 216 to 235 the chain is Cytoplasmic; the sequence is YIHIFSTVLGFPRGADRTKA. The chain crosses the membrane as a helical span at residues 236 to 256; that stretch reads FSTCIPHILVVSVFLSSCSSV. Topologically, residues 257–269 are extracellular; it reads YLRPPAIPAATQD. A helical membrane pass occupies residues 270 to 290; that stretch reads LILSGFYSIMPPLFNPIIYSL. Residues 291–312 are Cytoplasmic-facing; that stretch reads RNKQIKVAIKKIMKRIFYSENV.

This sequence belongs to the G-protein coupled receptor 1 family.

Its subcellular location is the cell membrane. In terms of biological role, odorant receptor. The protein is Olfactory receptor 14C36 (OR14C36) of Homo sapiens (Human).